We begin with the raw amino-acid sequence, 75 residues long: ATP synthase subunit c (75 aa).

2 helical membrane passes run 4-24 (GLIAIGIGISMISGLGVGLGQ) and 54-74 (AVAESAAIYALVISILLMFAF).

The protein belongs to the ATPase C chain family. F-type ATPases have 2 components, F(1) - the catalytic core - and F(0) - the membrane proton channel. F(1) has five subunits: alpha(3), beta(3), gamma(1), delta(1), epsilon(1). F(0) has three main subunits: a(1), b(2) and c(10-14). The alpha and beta chains form an alternating ring which encloses part of the gamma chain. F(1) is attached to F(0) by a central stalk formed by the gamma and epsilon chains, while a peripheral stalk is formed by the delta and b chains.

Its subcellular location is the cell membrane. In terms of biological role, f(1)F(0) ATP synthase produces ATP from ADP in the presence of a proton or sodium gradient. F-type ATPases consist of two structural domains, F(1) containing the extramembraneous catalytic core and F(0) containing the membrane proton channel, linked together by a central stalk and a peripheral stalk. During catalysis, ATP synthesis in the catalytic domain of F(1) is coupled via a rotary mechanism of the central stalk subunits to proton translocation. Key component of the F(0) channel; it plays a direct role in translocation across the membrane. A homomeric c-ring of between 10-14 subunits forms the central stalk rotor element with the F(1) delta and epsilon subunits. This is ATP synthase subunit c from Mycoplasmopsis agalactiae (strain NCTC 10123 / CIP 59.7 / PG2) (Mycoplasma agalactiae).